Here is a 342-residue protein sequence, read N- to C-terminus: Holliday junction branch migration complex subunit RuvB (342 aa).

The large ATPase domain (RuvB-L) stretch occupies residues 1 to 185; it reads MREDYLKSDD…FGINARLEYY (185 aa). Residues Leu24, Arg25, Gly66, Lys69, Thr70, Thr71, 132-134, Arg175, Tyr185, and Arg222 contribute to the ATP site; that span reads EDY. Residue Thr70 participates in Mg(2+) binding. The small ATPAse domain (RuvB-S) stretch occupies residues 186–256; that stretch reads DAKLLTRIVQ…IARIALQALN (71 aa). The segment at 259-342 is head domain (RuvB-H); it reads HNGLDDMDNR…PPAQSGTLFE (84 aa). DNA contacts are provided by Arg314 and Arg319.

The protein belongs to the RuvB family. Homohexamer. Forms an RuvA(8)-RuvB(12)-Holliday junction (HJ) complex. HJ DNA is sandwiched between 2 RuvA tetramers; dsDNA enters through RuvA and exits via RuvB. An RuvB hexamer assembles on each DNA strand where it exits the tetramer. Each RuvB hexamer is contacted by two RuvA subunits (via domain III) on 2 adjacent RuvB subunits; this complex drives branch migration. In the full resolvosome a probable DNA-RuvA(4)-RuvB(12)-RuvC(2) complex forms which resolves the HJ.

Its subcellular location is the cytoplasm. The enzyme catalyses ATP + H2O = ADP + phosphate + H(+). In terms of biological role, the RuvA-RuvB-RuvC complex processes Holliday junction (HJ) DNA during genetic recombination and DNA repair, while the RuvA-RuvB complex plays an important role in the rescue of blocked DNA replication forks via replication fork reversal (RFR). RuvA specifically binds to HJ cruciform DNA, conferring on it an open structure. The RuvB hexamer acts as an ATP-dependent pump, pulling dsDNA into and through the RuvAB complex. RuvB forms 2 homohexamers on either side of HJ DNA bound by 1 or 2 RuvA tetramers; 4 subunits per hexamer contact DNA at a time. Coordinated motions by a converter formed by DNA-disengaged RuvB subunits stimulates ATP hydrolysis and nucleotide exchange. Immobilization of the converter enables RuvB to convert the ATP-contained energy into a lever motion, pulling 2 nucleotides of DNA out of the RuvA tetramer per ATP hydrolyzed, thus driving DNA branch migration. The RuvB motors rotate together with the DNA substrate, which together with the progressing nucleotide cycle form the mechanistic basis for DNA recombination by continuous HJ branch migration. Branch migration allows RuvC to scan DNA until it finds its consensus sequence, where it cleaves and resolves cruciform DNA. The polypeptide is Holliday junction branch migration complex subunit RuvB (Cytophaga hutchinsonii (strain ATCC 33406 / DSM 1761 / CIP 103989 / NBRC 15051 / NCIMB 9469 / D465)).